Consider the following 370-residue polypeptide: Erythronate-4-phosphate dehydrogenase (370 aa).

Serine 45 and threonine 66 together coordinate substrate. Residues aspartate 142 and threonine 169 each contribute to the NAD(+) site. Arginine 202 is an active-site residue. Position 228 (aspartate 228) interacts with NAD(+). Glutamate 233 is an active-site residue. Histidine 250 (proton donor) is an active-site residue. Glycine 253 provides a ligand contact to NAD(+). A substrate-binding site is contributed by tyrosine 254.

The protein belongs to the D-isomer specific 2-hydroxyacid dehydrogenase family. PdxB subfamily. In terms of assembly, homodimer.

The protein resides in the cytoplasm. It carries out the reaction 4-phospho-D-erythronate + NAD(+) = (R)-3-hydroxy-2-oxo-4-phosphooxybutanoate + NADH + H(+). The protein operates within cofactor biosynthesis; pyridoxine 5'-phosphate biosynthesis; pyridoxine 5'-phosphate from D-erythrose 4-phosphate: step 2/5. Catalyzes the oxidation of erythronate-4-phosphate to 3-hydroxy-2-oxo-4-phosphonooxybutanoate. The polypeptide is Erythronate-4-phosphate dehydrogenase (Teredinibacter turnerae (strain ATCC 39867 / T7901)).